A 643-amino-acid polypeptide reads, in one-letter code: Mediator of RNA polymerase II transcription subunit 17 (643 aa).

A disordered region spans residues 53–82 (SDSEEDGAERARAGREQWKQEPEEDEGQLK). Residues 60–73 (AERARAGREQWKQE) are compositionally biased toward basic and acidic residues.

It belongs to the Mediator complex subunit 17 family. Component of the Mediator complex.

It localises to the nucleus. Its function is as follows. Component of the Mediator complex, a coactivator involved in the regulated transcription of nearly all RNA polymerase II-dependent genes. Mediator functions as a bridge to convey information from gene-specific regulatory proteins to the basal RNA polymerase II transcription machinery. Mediator is recruited to promoters by direct interactions with regulatory proteins and serves as a scaffold for the assembly of a functional preinitiation complex with RNA polymerase II and the general transcription factors. This chain is Mediator of RNA polymerase II transcription subunit 17 (med17), found in Danio rerio (Zebrafish).